A 110-amino-acid polypeptide reads, in one-letter code: Hydrogenase maturation factor HypA (110 aa).

His2 contributes to the Ni(2+) binding site. Zn(2+)-binding residues include Cys73, Cys76, Cys87, and Cys89.

Belongs to the HypA/HybF family.

Its function is as follows. Involved in the maturation of [NiFe] hydrogenases. Required for nickel insertion into the metal center of the hydrogenase. This chain is Hydrogenase maturation factor HypA, found in Archaeoglobus fulgidus (strain ATCC 49558 / DSM 4304 / JCM 9628 / NBRC 100126 / VC-16).